A 404-amino-acid chain; its full sequence is Metacaspase-1 (404 aa).

The tract at residues 1 to 97 (MHHHHQQPSY…NPQAFGHGAP (97 aa)) is disordered. Catalysis depends on residues His195 and Cys251.

This sequence belongs to the peptidase C14B family.

Involved in cell death (apoptosis). This chain is Metacaspase-1 (casA), found in Emericella nidulans (strain FGSC A4 / ATCC 38163 / CBS 112.46 / NRRL 194 / M139) (Aspergillus nidulans).